Consider the following 150-residue polypeptide: SsrA-binding protein (150 aa).

This sequence belongs to the SmpB family.

It is found in the cytoplasm. Required for rescue of stalled ribosomes mediated by trans-translation. Binds to transfer-messenger RNA (tmRNA), required for stable association of tmRNA with ribosomes. tmRNA and SmpB together mimic tRNA shape, replacing the anticodon stem-loop with SmpB. tmRNA is encoded by the ssrA gene; the 2 termini fold to resemble tRNA(Ala) and it encodes a 'tag peptide', a short internal open reading frame. During trans-translation Ala-aminoacylated tmRNA acts like a tRNA, entering the A-site of stalled ribosomes, displacing the stalled mRNA. The ribosome then switches to translate the ORF on the tmRNA; the nascent peptide is terminated with the 'tag peptide' encoded by the tmRNA and targeted for degradation. The ribosome is freed to recommence translation, which seems to be the essential function of trans-translation. The polypeptide is SsrA-binding protein (Borreliella afzelii (strain PKo) (Borrelia afzelii)).